A 345-amino-acid chain; its full sequence is GTPase Obg (345 aa).

Residues 1–159 (MKFLDQAKVY…KWIWLRLKLI (159 aa)) form the Obg domain. One can recognise an OBG-type G domain in the interval 160–327 (ADAGLVGLPN…ALRALLAVID (168 aa)). GTP-binding positions include 166 to 173 (GLPNAGKS), 191 to 195 (FTTLH), 212 to 215 (DIPG), 279 to 282 (SKID), and 308 to 310 (SSQ). Mg(2+) contacts are provided by serine 173 and threonine 193.

Belongs to the TRAFAC class OBG-HflX-like GTPase superfamily. OBG GTPase family. Monomer. The cofactor is Mg(2+).

Its subcellular location is the cytoplasm. An essential GTPase which binds GTP, GDP and possibly (p)ppGpp with moderate affinity, with high nucleotide exchange rates and a fairly low GTP hydrolysis rate. Plays a role in control of the cell cycle, stress response, ribosome biogenesis and in those bacteria that undergo differentiation, in morphogenesis control. The chain is GTPase Obg from Azorhizobium caulinodans (strain ATCC 43989 / DSM 5975 / JCM 20966 / LMG 6465 / NBRC 14845 / NCIMB 13405 / ORS 571).